Reading from the N-terminus, the 63-residue chain is MNFYNIFVFVALILAITIGQSEAGWLKKIGKKIERVGQHTRDATIQGLGIAQQAANVAATARG.

A signal peptide spans Met-1 to Ala-23. The residue at position 62 (Arg-62) is an Arginine amide.

The protein belongs to the cecropin family. Strongly expressed in larval, pupal and adult fat body and hemocytes after injection of bacteria. Maximal expression in the adult involves fat body cells of the head, thorax and abdomen.

It is found in the secreted. Its function is as follows. Cecropins have lytic and antibacterial activity against several Gram-positive and Gram-negative bacteria. The protein is Cecropin-A2 of Drosophila melanogaster (Fruit fly).